A 274-amino-acid polypeptide reads, in one-letter code: Large ribosomal subunit protein uL2 (274 aa).

Positions 223–265 (VVMNPVDHPHGGGEGRTSGGRHPVSPWGMPTKGFKTRKNKRTD) are disordered. Residues 256–265 (FKTRKNKRTD) are compositionally biased toward basic residues.

The protein belongs to the universal ribosomal protein uL2 family. In terms of assembly, part of the 50S ribosomal subunit. Forms a bridge to the 30S subunit in the 70S ribosome.

In terms of biological role, one of the primary rRNA binding proteins. Required for association of the 30S and 50S subunits to form the 70S ribosome, for tRNA binding and peptide bond formation. It has been suggested to have peptidyltransferase activity; this is somewhat controversial. Makes several contacts with the 16S rRNA in the 70S ribosome. This is Large ribosomal subunit protein uL2 from Vibrio parahaemolyticus serotype O3:K6 (strain RIMD 2210633).